Here is a 303-residue protein sequence, read N- to C-terminus: UDP-3-O-acyl-N-acetylglucosamine deacetylase (303 aa).

Residues His-77, His-236, and Asp-240 each contribute to the Zn(2+) site. His-263 serves as the catalytic Proton donor.

It belongs to the LpxC family. Requires Zn(2+) as cofactor.

The enzyme catalyses a UDP-3-O-[(3R)-3-hydroxyacyl]-N-acetyl-alpha-D-glucosamine + H2O = a UDP-3-O-[(3R)-3-hydroxyacyl]-alpha-D-glucosamine + acetate. It functions in the pathway glycolipid biosynthesis; lipid IV(A) biosynthesis; lipid IV(A) from (3R)-3-hydroxytetradecanoyl-[acyl-carrier-protein] and UDP-N-acetyl-alpha-D-glucosamine: step 2/6. Its function is as follows. Catalyzes the hydrolysis of UDP-3-O-myristoyl-N-acetylglucosamine to form UDP-3-O-myristoylglucosamine and acetate, the committed step in lipid A biosynthesis. This is UDP-3-O-acyl-N-acetylglucosamine deacetylase from Ruthia magnifica subsp. Calyptogena magnifica.